Reading from the N-terminus, the 172-residue chain is Cell division protein SepF (172 aa).

Positions 16–78 are disordered; that stretch reads DGDEHYEPQP…RAASNRDDSS (63 aa). A compositionally biased stretch (basic and acidic residues) spans 17 to 48; that stretch reads GDEHYEPQPEGKQTRPAQKNEEYVDQEIRHTE.

This sequence belongs to the SepF family. Homodimer. Interacts with FtsZ.

The protein resides in the cytoplasm. Cell division protein that is part of the divisome complex and is recruited early to the Z-ring. Probably stimulates Z-ring formation, perhaps through the cross-linking of FtsZ protofilaments. Its function overlaps with FtsA. This is Cell division protein SepF from Renibacterium salmoninarum (strain ATCC 33209 / DSM 20767 / JCM 11484 / NBRC 15589 / NCIMB 2235).